The following is a 370-amino-acid chain: 2-aminoethylphosphonate--pyruvate transaminase 2 (370 aa).

The residue at position 194 (K194) is an N6-(pyridoxal phosphate)lysine.

The protein belongs to the class-V pyridoxal-phosphate-dependent aminotransferase family. PhnW subfamily. In terms of assembly, homodimer. Pyridoxal 5'-phosphate is required as a cofactor.

The catalysed reaction is (2-aminoethyl)phosphonate + pyruvate = phosphonoacetaldehyde + L-alanine. In terms of biological role, involved in phosphonate degradation. This Paraburkholderia xenovorans (strain LB400) protein is 2-aminoethylphosphonate--pyruvate transaminase 2.